A 338-amino-acid chain; its full sequence is Ornithine carbamoyltransferase (338 aa).

S2 carries the post-translational modification N-acetylserine. Carbamoyl phosphate-binding positions include 67–70 (STRT), R118, H145, and Q148. L-ornithine-binding residues include N185, D249, S253, and M254. The active-site Proton acceptor is C289. Residues 289–290 (CL) and R316 contribute to the carbamoyl phosphate site.

Belongs to the aspartate/ornithine carbamoyltransferase superfamily. OTCase family. In terms of assembly, interacts with CAR1.

The protein localises to the cytoplasm. The catalysed reaction is carbamoyl phosphate + L-ornithine = L-citrulline + phosphate + H(+). Its pathway is amino-acid biosynthesis; L-arginine biosynthesis; L-arginine from L-ornithine and carbamoyl phosphate: step 1/3. Its activity is regulated as follows. Forms a stable complex with CAR1 in the presence of ornithine and arginine. In this complex CAR1 retains activity, but ARG3 activity is inhibited. The protein is Ornithine carbamoyltransferase (ARG3) of Saccharomyces cerevisiae (strain ATCC 204508 / S288c) (Baker's yeast).